A 128-amino-acid chain; its full sequence is uncharacterized protein (128 aa).

This is an uncharacterized protein from Archaeoglobus fulgidus (strain ATCC 49558 / DSM 4304 / JCM 9628 / NBRC 100126 / VC-16).